A 451-amino-acid polypeptide reads, in one-letter code: Kynureninase (451 aa).

Residues leucine 131, serine 132, 159–162 (FPSD), serine 215, aspartate 244, histidine 247, and tyrosine 269 each bind pyridoxal 5'-phosphate. Position 270 is an N6-(pyridoxal phosphate)lysine (lysine 270). Residues tryptophan 303 and asparagine 331 each coordinate pyridoxal 5'-phosphate.

The protein belongs to the kynureninase family. In terms of assembly, homodimer. It depends on pyridoxal 5'-phosphate as a cofactor.

The protein localises to the cytoplasm. It carries out the reaction L-kynurenine + H2O = anthranilate + L-alanine + H(+). It catalyses the reaction 3-hydroxy-L-kynurenine + H2O = 3-hydroxyanthranilate + L-alanine + H(+). It functions in the pathway amino-acid degradation; L-kynurenine degradation; L-alanine and anthranilate from L-kynurenine: step 1/1. Its pathway is cofactor biosynthesis; NAD(+) biosynthesis; quinolinate from L-kynurenine: step 2/3. In terms of biological role, catalyzes the cleavage of L-kynurenine (L-Kyn) and L-3-hydroxykynurenine (L-3OHKyn) into anthranilic acid (AA) and 3-hydroxyanthranilic acid (3-OHAA), respectively. The sequence is that of Kynureninase from Dictyostelium discoideum (Social amoeba).